We begin with the raw amino-acid sequence, 201 residues long: LexA repressor (201 aa).

Positions 29-49 (VREICKAVGLSSTSSVHFHLK) form a DNA-binding region, H-T-H motif. Active-site for autocatalytic cleavage activity residues include Ser125 and Lys162.

The protein belongs to the peptidase S24 family. As to quaternary structure, homodimer.

It carries out the reaction Hydrolysis of Ala-|-Gly bond in repressor LexA.. Its function is as follows. Represses a number of genes involved in the response to DNA damage (SOS response), including recA and lexA. In the presence of single-stranded DNA, RecA interacts with LexA causing an autocatalytic cleavage which disrupts the DNA-binding part of LexA, leading to derepression of the SOS regulon and eventually DNA repair. This is LexA repressor from Clostridium botulinum (strain 657 / Type Ba4).